Here is a 497-residue protein sequence, read N- to C-terminus: Lysine--tRNA ligase (497 aa).

Residues Glu-409 and Glu-416 each contribute to the Mg(2+) site.

The protein belongs to the class-II aminoacyl-tRNA synthetase family. In terms of assembly, homodimer. The cofactor is Mg(2+).

Its subcellular location is the cytoplasm. It carries out the reaction tRNA(Lys) + L-lysine + ATP = L-lysyl-tRNA(Lys) + AMP + diphosphate. The polypeptide is Lysine--tRNA ligase (Streptococcus pyogenes serotype M3 (strain ATCC BAA-595 / MGAS315)).